A 68-amino-acid polypeptide reads, in one-letter code: Large ribosomal subunit protein uL29 (68 aa).

Belongs to the universal ribosomal protein uL29 family.

In Wigglesworthia glossinidia brevipalpis, this protein is Large ribosomal subunit protein uL29.